The chain runs to 748 residues: Structure-specific endonuclease subunit SLX4 (748 aa).

The interval 50-102 (LSSDDDSISTQVKSVTAQKSPITQETTKNDTERNKDVDKSCNPVSTSQPDLGE) is disordered. Positions 57–75 (ISTQVKSVTAQKSPITQET) are enriched in polar residues. Thr72 is modified (phosphothreonine; by ATR and ATM). Residues 76–88 (TKNDTERNKDVDK) are compositionally biased toward basic and acidic residues. Thr113 carries the phosphothreonine; by ATR and ATM modification. Disordered stretches follow at residues 215 to 236 (IKTQ…KGEK) and 277 to 303 (EKSS…PPEL). Positions 222-236 (NSDKPPRARNNKGEK) are enriched in basic and acidic residues. The span at 277-291 (EKSSSSLDNQESSQQ) shows a compositional bias: low complexity. Ser289 carries the post-translational modification Phosphoserine; by ATR and ATM. A Phosphothreonine; by ATR and ATM modification is found at Thr319. 2 positions are modified to phosphoserine; by ATR and ATM: Ser329 and Ser355.

Belongs to the SLX4 family. In terms of assembly, forms a heterodimer with SLX1. Interacts with RAD1; catalytic subunit of the RAD1-RAD10 endonuclease. Interacts with RTT107. In terms of processing, phosphorylated by ATR (MEC1) and ATM (TEL1) upon DNA damage. This appears to be required for the function with the RAD1-RAD10 endonuclease.

It is found in the nucleus. Its subcellular location is the cytoplasm. In terms of biological role, regulatory subunit that interacts with and increases the activity of different structure-specific endonucleases. Has several distinct roles in protecting genome stability by resolving diverse forms of deleterious DNA structures. Component of the SLX1-SLX4 structure-specific endonuclease that resolves DNA secondary structures generated during DNA repair and recombination. Has endonuclease activity towards branched DNA substrates, introducing single-strand cuts in duplex DNA close to junctions with ss-DNA. Has a preference for simple Y, 5'-flap and replication fork-like structures. It cleaves the strand bearing the 5'-non-homologous arm at the branch site junction and generates ligatable, nicked products from the 5'-flap or replication fork substrates. Plays a critical role in maintaining the integrity of the ribosomal DNA (rDNA) loci, where it has a role in re-starting stalled replication forks. Has Holliday junction resolvase activity in vitro. Interacts with the structure-specific RAD1-RAD10 endonuclease and promotes RAD1-RAD10-dependent 3'-non-homologous tail removal (NHTR) during repair of double-strand breaks by single-strand annealing. SLX4 also promotes recovery from DNA-alkylation-induced replisome stalling during DNA replication by facilitating the error-free mode of lesion bypass. This does not require SLX1 or RAD1-RAD10, but probably RTT107. The sequence is that of Structure-specific endonuclease subunit SLX4 from Saccharomyces cerevisiae (strain YJM789) (Baker's yeast).